Consider the following 134-residue polypeptide: Small ribosomal subunit protein uS11 (134 aa).

The protein belongs to the universal ribosomal protein uS11 family. Part of the 30S ribosomal subunit. Interacts with proteins S7 and S18. Binds to IF-3.

Located on the platform of the 30S subunit, it bridges several disparate RNA helices of the 16S rRNA. Forms part of the Shine-Dalgarno cleft in the 70S ribosome. In Salinibacter ruber (strain DSM 13855 / M31), this protein is Small ribosomal subunit protein uS11.